Consider the following 348-residue polypeptide: MTGREILEKLERREFTREVLKEALSINDRGFNEALFKLADEIRRKYVGDEVHIRAIIEFSNVCRKNCLYCGLRRDNKNLKRYRMTPEEIVERARLAVQFGAKTIVLQSGEDPYYMPDVISDIVKEIKKMGVAVTLSLGEWPREYYEKWKEAGADRYLLRHETANPVLHRKLRPDTSFENRLNCLLTLKELGYETGAGSMVGLPGQTIDDLVDDLLFLKEHDFDMVGIGPFIPHPDTPLANEKKGDFTLTLKMVALTRILLPDSNIPATTAMGTIVPGGREITLRCGANVIMPNWTPSPYRQLYQLYPGKICVFEKDTACIPCVMKMIELLGRKPGRDWGGRKRVFETV.

The 220-residue stretch at 49-268 (DEVHIRAIIE…LLPDSNIPAT (220 aa)) folds into the Radical SAM core domain. Residues Cys63, Cys67, and Cys70 each coordinate [4Fe-4S] cluster. Positions 311, 319, and 322 each coordinate [2Fe-2S] cluster.

This sequence belongs to the radical SAM superfamily. HydE family. As to quaternary structure, monomer. [4Fe-4S] cluster serves as cofactor. It depends on [2Fe-2S] cluster as a cofactor.

Required for the maturation of the [FeFe]-hydrogenase HydA. Catalyzes the reductive cleavage of S-adenosyl-L-methionine (in vitro), suggesting it may contribute to the biosynthesis of an essential sulfur-containing ligand that binds to the hydrogenase active site [2Fe-2S] cluster. The sequence is that of [FeFe] hydrogenase maturase subunit HydE from Thermotoga maritima (strain ATCC 43589 / DSM 3109 / JCM 10099 / NBRC 100826 / MSB8).